A 460-amino-acid chain; its full sequence is Probable Xaa-Pro aminopeptidase VDBG_02538 (460 aa).

The Mn(2+) site is built by Asp256, Asp267, Glu390, and Glu430.

It belongs to the peptidase M24B family. Mn(2+) serves as cofactor.

It catalyses the reaction Release of any N-terminal amino acid, including proline, that is linked to proline, even from a dipeptide or tripeptide.. Catalyzes the removal of a penultimate prolyl residue from the N-termini of peptides. The sequence is that of Probable Xaa-Pro aminopeptidase VDBG_02538 from Verticillium alfalfae (strain VaMs.102 / ATCC MYA-4576 / FGSC 10136) (Verticillium wilt of alfalfa).